A 468-amino-acid chain; its full sequence is Probable citrate synthase, mitochondrial (468 aa).

Active-site residues include histidine 303, histidine 349, and aspartate 404.

It belongs to the citrate synthase family. In terms of assembly, homodimer.

The protein localises to the mitochondrion matrix. It carries out the reaction oxaloacetate + acetyl-CoA + H2O = citrate + CoA + H(+). It participates in carbohydrate metabolism; tricarboxylic acid cycle; isocitrate from oxaloacetate: step 1/2. This Caenorhabditis briggsae protein is Probable citrate synthase, mitochondrial (cts-1).